Consider the following 308-residue polypeptide: Pseudouridine-5'-phosphate glycosidase (308 aa).

Glu25 functions as the Proton donor in the catalytic mechanism. Substrate-binding residues include Lys86 and Val106. Asp142 serves as a coordination point for Mn(2+). Residue 144-146 (SAD) coordinates substrate. The active-site Nucleophile is Lys163.

Belongs to the pseudouridine-5'-phosphate glycosidase family. In terms of assembly, homotrimer. It depends on Mn(2+) as a cofactor.

The enzyme catalyses D-ribose 5-phosphate + uracil = psi-UMP + H2O. Catalyzes the reversible cleavage of pseudouridine 5'-phosphate (PsiMP) to ribose 5-phosphate and uracil. Functions biologically in the cleavage direction, as part of a pseudouridine degradation pathway. The sequence is that of Pseudouridine-5'-phosphate glycosidase from Symbiobacterium thermophilum (strain DSM 24528 / JCM 14929 / IAM 14863 / T).